We begin with the raw amino-acid sequence, 342 residues long: Holliday junction branch migration complex subunit RuvB (342 aa).

Residues 1 to 181 form a large ATPase domain (RuvB-L) region; that stretch reads MEERFLTPKD…FGMVLELEFY (181 aa). ATP-binding positions include L20, R21, G62, K65, T66, T67, 128 to 130, R171, Y181, and R218; that span reads EDF. Residue T66 participates in Mg(2+) binding. The segment at 182-252 is small ATPAse domain (RuvB-S); that stretch reads TPDELKQIIK…TVEDAMKIMG (71 aa). The tract at residues 255 to 342 is head domain (RuvB-H); it reads AEGLDDMDRK…IGPLWDSTGD (88 aa). DNA contacts are provided by R310 and R315.

Belongs to the RuvB family. Homohexamer. Forms an RuvA(8)-RuvB(12)-Holliday junction (HJ) complex. HJ DNA is sandwiched between 2 RuvA tetramers; dsDNA enters through RuvA and exits via RuvB. An RuvB hexamer assembles on each DNA strand where it exits the tetramer. Each RuvB hexamer is contacted by two RuvA subunits (via domain III) on 2 adjacent RuvB subunits; this complex drives branch migration. In the full resolvosome a probable DNA-RuvA(4)-RuvB(12)-RuvC(2) complex forms which resolves the HJ.

The protein localises to the cytoplasm. The enzyme catalyses ATP + H2O = ADP + phosphate + H(+). Functionally, the RuvA-RuvB-RuvC complex processes Holliday junction (HJ) DNA during genetic recombination and DNA repair, while the RuvA-RuvB complex plays an important role in the rescue of blocked DNA replication forks via replication fork reversal (RFR). RuvA specifically binds to HJ cruciform DNA, conferring on it an open structure. The RuvB hexamer acts as an ATP-dependent pump, pulling dsDNA into and through the RuvAB complex. RuvB forms 2 homohexamers on either side of HJ DNA bound by 1 or 2 RuvA tetramers; 4 subunits per hexamer contact DNA at a time. Coordinated motions by a converter formed by DNA-disengaged RuvB subunits stimulates ATP hydrolysis and nucleotide exchange. Immobilization of the converter enables RuvB to convert the ATP-contained energy into a lever motion, pulling 2 nucleotides of DNA out of the RuvA tetramer per ATP hydrolyzed, thus driving DNA branch migration. The RuvB motors rotate together with the DNA substrate, which together with the progressing nucleotide cycle form the mechanistic basis for DNA recombination by continuous HJ branch migration. Branch migration allows RuvC to scan DNA until it finds its consensus sequence, where it cleaves and resolves cruciform DNA. In Kosmotoga olearia (strain ATCC BAA-1733 / DSM 21960 / TBF 19.5.1), this protein is Holliday junction branch migration complex subunit RuvB.